The chain runs to 157 residues: Arginine repressor (157 aa).

This sequence belongs to the ArgR family.

It localises to the cytoplasm. The protein operates within amino-acid biosynthesis; L-arginine biosynthesis [regulation]. Its function is as follows. Regulates arginine biosynthesis genes. The protein is Arginine repressor of Bacteroides thetaiotaomicron (strain ATCC 29148 / DSM 2079 / JCM 5827 / CCUG 10774 / NCTC 10582 / VPI-5482 / E50).